Reading from the N-terminus, the 758-residue chain is Vitamin K-dependent gamma-carboxylase (758 aa).

Positions 1–22 (MAVSAGSARTSPSSDKVQKDKA) are disordered. Ala2 is modified (N-acetylalanine). The Cytoplasmic portion of the chain corresponds to 2–60 (AVSAGSARTSPSSDKVQKDKAELISGPRQDSRIGKLLGFEWTDLSSWRRLVTLLNRPTD). The chain crosses the membrane as a helical span at residues 61 to 81 (PASLAVFRFLFGFLMVLDIPQ). The Lumenal portion of the chain corresponds to 82-113 (ERGLSSLDRKYLDGLDVCRFPLLDALRPLPLD). Residues Cys99 and Cys450 are joined by a disulfide bond. The chain crosses the membrane as a helical span at residues 114–134 (WMYLVYTIMFLGALGMMLGLC). The Cytoplasmic segment spans residues 135-136 (YR). A helical membrane pass occupies residues 137–157 (ISCVLFLLPYWYVFLLDKTSW). Over 158–292 (NNHSYLYGLL…VSYFHCMNSQ (135 aa)) the chain is Lumenal. The Proton acceptor role is filled by Lys218. A helical transmembrane segment spans residues 293–313 (LFSIGMFSYVMLASSPLFCSP). At 314-361 (EWPRKLVSYCPRRLQQLLPLKAAPQPSVSCVYKRSRGKSGQKPGLRHQ) the chain is on the cytoplasmic side. A helical membrane pass occupies residues 362–382 (LGAAFTLLYLLEQLFLPYSHF). Residues 383–758 (LTQGYNNWTN…SNPDPVHSEF (376 aa)) are Lumenal-facing. Asn459 and Asn550 each carry an N-linked (GlcNAc...) asparagine glycan. The disordered stretch occupies residues 732–758 (GELNPSNTDSSHSNPPESNPDPVHSEF). A compositionally biased stretch (polar residues) spans 735–747 (NPSNTDSSHSNPP).

It belongs to the vitamin K-dependent gamma-carboxylase family. In terms of assembly, monomer. May interact with CALU.

It localises to the endoplasmic reticulum membrane. The enzyme catalyses 4-carboxy-L-glutamyl-[protein] + 2,3-epoxyphylloquinone + H2O + H(+) = phylloquinol + L-glutamyl-[protein] + CO2 + O2. Functionally, mediates the vitamin K-dependent carboxylation of glutamate residues to calcium-binding gamma-carboxyglutamate (Gla) residues with the concomitant conversion of the reduced hydroquinone form of vitamin K to vitamin K epoxide. Catalyzes gamma-carboxylation of various proteins, such as blood coagulation factors (F2, F7, F9 and F10), osteocalcin (BGLAP) or matrix Gla protein (MGP). The chain is Vitamin K-dependent gamma-carboxylase (GGCX) from Homo sapiens (Human).